Here is a 350-residue protein sequence, read N- to C-terminus: Geranylgeranyl pyrophosphate synthase (350 aa).

Isopentenyl diphosphate-binding residues include Lys66, Arg69, and His98. Residues Asp105 and Asp109 each coordinate Mg(2+). Residue Arg114 coordinates dimethylallyl diphosphate. Arg115 contacts isopentenyl diphosphate. Positions 200, 201, 236, 243, and 263 each coordinate dimethylallyl diphosphate.

The protein belongs to the FPP/GGPP synthase family. Requires Mg(2+) as cofactor.

The enzyme catalyses isopentenyl diphosphate + dimethylallyl diphosphate = (2E)-geranyl diphosphate + diphosphate. The catalysed reaction is isopentenyl diphosphate + (2E)-geranyl diphosphate = (2E,6E)-farnesyl diphosphate + diphosphate. It catalyses the reaction isopentenyl diphosphate + (2E,6E)-farnesyl diphosphate = (2E,6E,10E)-geranylgeranyl diphosphate + diphosphate. The protein operates within secondary metabolite biosynthesis; terpenoid biosynthesis. In terms of biological role, geranylgeranyl pyrophosphate synthase; part of the gene cluster that mediates the biosynthesis of pleuromutilin, a tricyclic diterpene showing antibacterial properties. The geranylgeranyl diphosphate (GGPP) synthase catalyzes the first step in pleuromutilin biosynthesis. GGPP is then substrate of the premutilin synthase (PS) to yield premutilin. Premutilin synthase is a bifunctional enzyme composed of the fusion of a class II diterpene cyclase (DTC) and a class I diterpene synthase (DTS), with the corresponding domains and active sites containing characteristic aspartate-rich motifs. GGPP is first converted to mutildienyl-diphosphate (MPP) at the class II DTC site. MPP is subsequently further cyclized at the class I DTS site, followed by a 1,5-hydride shift and addition of water prior to terminating deprotonation, to yield premutilin. In addition to the aforementioned GGPP synthase and bifunctional diterpene synthase, the cluster also contains three cytochrome P450 monooxygenases, a short-chain alcohol dehydrogenase, and an acyltransferase, involved in the conversion of premutilin to pleuromutilin. The cytochrome P450 monooxygenases P450-1 and P450-2 hydroxylate premutilin at C-11 and C-3, respectively, producing 11-hydroxypremutilin and 3-hydroxypremutilin. The combination of the actions of both ple5 and ple6 leads to the production of 3,11-dihydroxypremutilin. The short chain dehydrogenase SDR further converts 3,11-dihydroxypremutilin into mutilin. The acetyltransferase ATF then acetylates mutilin to produce 14-O-acetylmutilin. Finally, the cytochrome P450 monooxygenase P450-3 catalyzes hydroxylation on the alpha position of the acetyl side chain of 14-O-acetylmutilin to yield pleuromutilin. This chain is Geranylgeranyl pyrophosphate synthase, found in Clitopilus passeckerianus (Pleurotus passeckerianus).